Consider the following 222-residue polypeptide: GTP cyclohydrolase 1 (222 aa).

The Zn(2+) site is built by Cys111, His114, and Cys182.

The protein belongs to the GTP cyclohydrolase I family. As to quaternary structure, toroid-shaped homodecamer, composed of two pentamers of five dimers.

It carries out the reaction GTP + H2O = 7,8-dihydroneopterin 3'-triphosphate + formate + H(+). It participates in cofactor biosynthesis; 7,8-dihydroneopterin triphosphate biosynthesis; 7,8-dihydroneopterin triphosphate from GTP: step 1/1. This Enterobacter sp. (strain 638) protein is GTP cyclohydrolase 1.